A 467-amino-acid polypeptide reads, in one-letter code: MQTRRRLHQTDQQDYSSSSTYTIQEDQQGGAGAGSVGTGTAGGSVGLLAQSLVPPPTGHEAAIHIGDNYQSGDSISTPDYSDDKYGKAARQWNLRAFSGHALRTLSAAAAVVTGNQPGINNDSQSNYSYPASIPTSSQFYQSKEEPQETEPEPEIFVMAARDRTGEFANAIRSLQARNITRAVNIRDPRKAKQVQSYSEFMMVARFIGKNIASTYAKLEKLTMLAKKKSLFDDRPQEIQELTYIIKGDLNALNQQIARLQDISKDQRRHTNGKHLVSHSSNMVLALQSKLASMSTDFKQILEVRTENLKQQKTRRDQFSQGPGPLAAHTVSPSTAKQGSLLLSEENQAVSIDMGSSDTTPLLSTQTQMAIYDDSDNYVQQRAETMQNIESTIVELGGIFQQLAHMVKEQEEIVERIDTNVADAELNIEAAHGEILKYFQSVSKNRWLMIKIFGVLIFFFLFFVVFMS.

Disordered regions lie at residues 1-53 and 58-77; these read MQTR…QSLV and GHEA…SIST. At 1 to 445 the chain is on the cytoplasmic side; sequence MQTRRRLHQT…KYFQSVSKNR (445 aa). Low complexity predominate over residues 10-22; it reads TDQQDYSSSSTYT. Gly residues predominate over residues 29–45; that stretch reads GGAGAGSVGTGTAGGSV. Residues 68-77 are compositionally biased toward polar residues; sequence NYQSGDSIST. Residues 245–269 adopt a coiled-coil conformation; it reads IKGDLNALNQQIARLQDISKDQRRH. Residues 310–335 are disordered; it reads QQKTRRDQFSQGPGPLAAHTVSPSTA. The t-SNARE coiled-coil homology domain occupies 375 to 437; it reads DNYVQQRAET…EAAHGEILKY (63 aa). Residues 446 to 466 form a helical; Anchor for type IV membrane protein membrane-spanning segment; the sequence is WLMIKIFGVLIFFFLFFVVFM. A topological domain (vesicular) is located at residue Ser-467.

It belongs to the syntaxin family. Homodimer.

It localises to the golgi apparatus. The protein resides in the cis-Golgi network membrane. Mediates endoplasmic reticulum to Golgi transport. This Drosophila melanogaster (Fruit fly) protein is Syntaxin-5.